A 358-amino-acid polypeptide reads, in one-letter code: Mitogen-activated protein kinase hog-1 (358 aa).

The 280-residue stretch at 20–299 (YSDLQPVGMG…ATEALSHEYL (280 aa)) folds into the Protein kinase domain. Residues 26 to 34 (VGMGAFGLV) and lysine 49 contribute to the ATP site. Catalysis depends on aspartate 141, which acts as the Proton acceptor. Threonine 171 is modified (phosphothreonine). The TXY signature appears at 171 to 173 (TGY). Tyrosine 173 carries the phosphotyrosine modification.

Belongs to the protein kinase superfamily. Ser/Thr protein kinase family. MAP kinase subfamily. HOG1 sub-subfamily. The cofactor is Mg(2+). Dually phosphorylated on Thr-171 and Tyr-173, which activates the enzyme. Phosphorylation is induced by fungicides and osmotic stress.

It localises to the cytoplasm. The protein localises to the nucleus. It carries out the reaction L-seryl-[protein] + ATP = O-phospho-L-seryl-[protein] + ADP + H(+). The enzyme catalyses L-threonyl-[protein] + ATP = O-phospho-L-threonyl-[protein] + ADP + H(+). Its activity is regulated as follows. Activated by tyrosine and threonine phosphorylation. Its function is as follows. Proline-directed serine/threonine-protein kinase involved in a signal transduction pathway that is activated by changes in the osmolarity of the extracellular environment. Controls osmotic regulation of transcription of target genes. Involved in ion flux-mediated turgor regulation. This Neurospora crassa (strain ATCC 24698 / 74-OR23-1A / CBS 708.71 / DSM 1257 / FGSC 987) protein is Mitogen-activated protein kinase hog-1 (hog-1).